We begin with the raw amino-acid sequence, 313 residues long: HPr kinase/phosphorylase (313 aa).

Active-site residues include His-141 and Lys-162. 156–163 (GKSGIGKS) contributes to the ATP binding site. A Mg(2+)-binding site is contributed by Ser-163. Asp-180 acts as the Proton acceptor; for phosphorylation activity. Proton donor; for dephosphorylation activity in catalysis. The segment at 203-212 (IEIRGIGIFD) is important for the catalytic mechanism of both phosphorylation and dephosphorylation. Mg(2+) is bound at residue Glu-204. Arg-247 is an active-site residue. The segment at 268 to 273 (PVSAGR) is important for the catalytic mechanism of dephosphorylation.

It belongs to the HPrK/P family. Homohexamer. It depends on Mg(2+) as a cofactor.

The enzyme catalyses [HPr protein]-L-serine + ATP = [HPr protein]-O-phospho-L-serine + ADP + H(+). It catalyses the reaction [HPr protein]-O-phospho-L-serine + phosphate + H(+) = [HPr protein]-L-serine + diphosphate. Catalyzes the ATP- as well as the pyrophosphate-dependent phosphorylation of a specific serine residue in HPr, a phosphocarrier protein of the phosphoenolpyruvate-dependent sugar phosphotransferase system (PTS). HprK/P also catalyzes the pyrophosphate-producing, inorganic phosphate-dependent dephosphorylation (phosphorolysis) of seryl-phosphorylated HPr (P-Ser-HPr). The two antagonistic activities of HprK/P are regulated by several intracellular metabolites, which change their concentration in response to the absence or presence of rapidly metabolisable carbon sources (glucose, fructose, etc.) in the growth medium. Therefore, by controlling the phosphorylation state of HPr, HPrK/P is a sensor enzyme that plays a major role in the regulation of carbon metabolism and sugar transport: it mediates carbon catabolite repression (CCR), and regulates PTS-catalyzed carbohydrate uptake and inducer exclusion. The sequence is that of HPr kinase/phosphorylase from Mycoplasma mycoides subsp. mycoides SC (strain CCUG 32753 / NCTC 10114 / PG1).